Consider the following 430-residue polypeptide: Glutamate-1-semialdehyde 2,1-aminomutase (430 aa).

Lys267 bears the N6-(pyridoxal phosphate)lysine mark.

Belongs to the class-III pyridoxal-phosphate-dependent aminotransferase family. HemL subfamily. In terms of assembly, homodimer. The cofactor is pyridoxal 5'-phosphate.

The protein localises to the cytoplasm. The enzyme catalyses (S)-4-amino-5-oxopentanoate = 5-aminolevulinate. It functions in the pathway porphyrin-containing compound metabolism; protoporphyrin-IX biosynthesis; 5-aminolevulinate from L-glutamyl-tRNA(Glu): step 2/2. The chain is Glutamate-1-semialdehyde 2,1-aminomutase from Anaeromyxobacter sp. (strain K).